We begin with the raw amino-acid sequence, 56 residues long: Large ribosomal subunit protein bL32 (56 aa).

Over residues 1–16 the composition is skewed to basic residues; it reads MAVQKSKKSRSRRGMR. Positions 1-38 are disordered; that stretch reads MAVQKSKKSRSRRGMRRSHDAVTPENLSVDPVSGETHR.

This sequence belongs to the bacterial ribosomal protein bL32 family.

The polypeptide is Large ribosomal subunit protein bL32 (Colwellia psychrerythraea (strain 34H / ATCC BAA-681) (Vibrio psychroerythus)).